Here is a 237-residue protein sequence, read N- to C-terminus: Ribosomal RNA small subunit methyltransferase G (237 aa).

Residues G78, F83, 129–130 (AE), and R148 each bind S-adenosyl-L-methionine.

It belongs to the methyltransferase superfamily. RNA methyltransferase RsmG family.

It localises to the cytoplasm. Functionally, specifically methylates the N7 position of a guanine in 16S rRNA. In Streptococcus pyogenes serotype M12 (strain MGAS9429), this protein is Ribosomal RNA small subunit methyltransferase G.